A 98-amino-acid chain; its full sequence is Ribonuclease kappa (98 aa).

2 consecutive transmembrane segments (helical) span residues 13-33 (ACGIVLSAWGVIMLIMLGIFF) and 65-85 (VSYNCFIAAGLYLLLGGFSFC).

The protein belongs to the RNase K family. Interacts with the proton translocation complex V0 of the V-ATPase. Interacts with ATP6AP1.

The protein resides in the endomembrane system. It is found in the cytoplasmic vesicle. It localises to the clathrin-coated vesicle membrane. Endoribonuclease which preferentially cleaves ApU and ApG phosphodiester bonds. Hydrolyzes UpU bonds at a lower rate. Regulates the activity of vacuolar (H+)-ATPase (V-ATPase) which is responsible for acidifying and maintaining the pH of intracellular compartments. Required at an early stage of receptor-mediated endocytosis. The polypeptide is Ribonuclease kappa (Rnasek) (Mus musculus (Mouse)).